The sequence spans 66 residues: uncharacterized protein (66 aa).

To M.jannaschii MJ0582.

This is an uncharacterized protein from Methanocaldococcus jannaschii (strain ATCC 43067 / DSM 2661 / JAL-1 / JCM 10045 / NBRC 100440) (Methanococcus jannaschii).